A 30-amino-acid polypeptide reads, in one-letter code: Natriuretic peptides A (30 aa).

The propeptide occupies 1–3 (APR). Cysteines 11 and 27 form a disulfide.

The protein belongs to the natriuretic peptide family. In terms of processing, cleaved upon secretion to produce the functional hormone.

It is found in the secreted. In terms of biological role, hormone playing a key role in cardiovascular homeostasis through regulation of natriuresis, diuresis, and vasodilation. Has a cGMP-stimulating activity. The polypeptide is Natriuretic peptides A (Pelophylax ridibundus (Marsh frog)).